The sequence spans 392 residues: MEAPLVSLDEEFEDIRPSCTEEPEEKPQCLYGTSPHHLEDPSLSELENFSSEIISFKSMEDLVNEFDEKLNVCFRNYNAKTESLAPVKNQLQIQEEEETLRDEEVWDALTDNYIPSLSEDWRDPNIEALNGNSSDIEIHEKEEEEFNEKSENDSGINEEPLLTADQVIEEIEEMMQNSPDPEEEEEVLEEEDGGEISSQADSVLLQEMQALTQTFNNNWSYEGLRHMSGSELTELLDRVEGAIRDFSEELVHQLARRDELEFEKEVKNSFITVLIEVQNKQREQRELMKKRRKEKGLSLQSNRIEKGSQMPLKRFSMEGISNILQSGIRQTFGSSGADRQYLNTVIPYEKKSSPPSVEDLQMLTNILFAMKEDNEKVPTLLTDYILKVLCPT.

The segment at 1-36 (MEAPLVSLDEEFEDIRPSCTEEPEEKPQCLYGTSPH) is disordered. The residue at position 58 (S58) is a Phosphoserine. The interval 175-196 (MQNSPDPEEEEEVLEEEDGGEI) is disordered. Residues 180 to 194 (DPEEEEEVLEEEDGG) are compositionally biased toward acidic residues. Positions 230–298 (SELTELLDRV…KKRRKEKGLS (69 aa)) form a coiled coil. A phosphoserine mark is found at S298 and S316.

The protein belongs to the zygin family. Homodimer. Interacts with the NH2-terminal variable region (V1) of PKC zeta and weakly with that of PKC epsilon. Interacts with UBE4B and SAP30L. Interacts with SCOC and ULK1; SCOC interferes with ULK1-binding to FEZ1. Directly interacts with SCOC and UVRAG. Stabilizes the interaction between SCOC and UVRAG during amino acid starvation. Phosphorylated by protein kinase C zeta; which enhances interaction with UBE4B and polyubiquitination. Post-translationally, polyubiquitinated in a UBE4B-dependent manner; which does not lead to proteasomal degradation and may be important for neurogenic activity. Polyubiquitin linkage seems to be mainly through Lys-26.

The protein resides in the cytoplasm. Its subcellular location is the cytoskeleton. The protein localises to the microtubule organizing center. It is found in the centrosome. It localises to the cell membrane. In terms of biological role, may be involved in axonal outgrowth as component of the network of molecules that regulate cellular morphology and axon guidance machinery. May participate in the transport of mitochondria and other cargos along microtubules. The protein is Fasciculation and elongation protein zeta-1 (Fez1) of Mus musculus (Mouse).